Reading from the N-terminus, the 391-residue chain is Trehalose-phosphate phosphatase (391 aa).

Asp147 serves as the catalytic Nucleophile. 3 residues coordinate Mg(2+): Asp147, Asp149, and Asp330. 147 to 149 (DFD) contributes to the substrate binding site.

The protein belongs to the trehalose phosphatase family. Mg(2+) is required as a cofactor.

The enzyme catalyses alpha,alpha-trehalose 6-phosphate + H2O = alpha,alpha-trehalose + phosphate. The protein operates within glycan biosynthesis; trehalose biosynthesis. Its function is as follows. Removes the phosphate from trehalose 6-phosphate to produce free trehalose. The chain is Trehalose-phosphate phosphatase (otsB) from Mycobacterium bovis (strain ATCC BAA-935 / AF2122/97).